Reading from the N-terminus, the 561-residue chain is Glutamine--tRNA ligase (561 aa).

A 'HIGH' region motif is present at residues 34-44; that stretch reads PEPNGYLHIGH. ATP is bound by residues 35–37 and 41–47; these read EPN and HIGHAKS. Residues D67 and Y212 each contribute to the L-glutamine site. ATP is bound by residues T231, 261 to 262, and 269 to 271; these read RL and MSK. A 'KMSKS' region motif is present at residues 268–272; that stretch reads VMSKR.

It belongs to the class-I aminoacyl-tRNA synthetase family. As to quaternary structure, monomer.

Its subcellular location is the cytoplasm. The enzyme catalyses tRNA(Gln) + L-glutamine + ATP = L-glutaminyl-tRNA(Gln) + AMP + diphosphate. This is Glutamine--tRNA ligase from Idiomarina loihiensis (strain ATCC BAA-735 / DSM 15497 / L2-TR).